We begin with the raw amino-acid sequence, 317 residues long: Cyclin-T1-3 (317 aa).

This sequence belongs to the cyclin family. Cyclin T subfamily. In terms of assembly, interacts with CDKC-1 and CDKC-2. In terms of tissue distribution, abundantly expressed in flowers. Expressed in roots, seedlings, rosettes and stems.

This is Cyclin-T1-3 (CYCT1-3) from Arabidopsis thaliana (Mouse-ear cress).